The following is a 188-amino-acid chain: Quinone reductase (188 aa).

FMN-binding positions include 13–20 (SLRKGSFN), 82–85 (EYNY), and Ser-117.

Belongs to the SsuE family. In terms of assembly, homotetramer. Dimer of dimers. The tetrameric configuration has a central role in chromate reductase activity. FMN is required as a cofactor.

It catalyses the reaction a quinone + NADH + H(+) = a quinol + NAD(+). It carries out the reaction a quinone + NADPH + H(+) = a quinol + NADP(+). The catalysed reaction is Cr(6+) + 2 NADH + O2 = Cr(3+) + superoxide + 2 NAD(+) + 2 H(+). The enzyme catalyses Cr(6+) + 2 NADPH + O2 = Cr(3+) + superoxide + 2 NADP(+) + 2 H(+). Catalyzes the reduction of quinones. Acts by simultaneous two-electron transfer, avoiding formation of highly reactive semiquinone intermediates and producing quinols that promote tolerance of H(2)O(2). Quinone reduction is probably the primary biological role of ChrR. Can also reduce toxic chromate to insoluble and less toxic Cr(3+). Catalyzes the transfer of three electrons to Cr(6+) producing Cr(3+) and one electron to molecular oxygen without producing the toxic Cr(5+) species and only producing a minimal amount of reactive oxygen species (ROS). Chromate reduction protects the cell against chromate toxicity, but is likely a secondary activity. This Escherichia coli O157:H7 protein is Quinone reductase (chrR).